Here is an 889-residue protein sequence, read N- to C-terminus: Inter-alpha-trypsin inhibitor heavy chain H3 (889 aa).

The signal sequence occupies residues 1 to 21 (MRTMWWPCLVLALLSGLETSG). The propeptide occupies 22–33 (FPRSPLQLLGKR). The 130-residue stretch at 29–158 (LLGKRSLPEG…KVTFELTYEE (130 aa)) folds into the VIT domain. N-linked (GlcNAc...) asparagine glycosylation is present at Asn91. Positions 284 to 467 (NIVFVIDVSG…LQLQGFYEEV (184 aa)) constitute a VWFA domain. A glycan (N-linked (GlcNAc...) asparagine) is linked at Asn580. The residue at position 649 (Asp649) is an Aspartate 1-(chondroitin 4-sulfate)-ester. Residues 650 to 889 (PHFIIQIPGK…HTDYIVPSLF (240 aa)) constitute a propeptide that is removed on maturation.

Belongs to the ITIH family. In terms of assembly, I-alpha-I plasma protease inhibitors are assembled from one or two heavy chains (HC) and one light chain, bikunin. Pre-alpha-inhibitor (P-alpha-I) is composed of ITIH3/HC3 and bikunin. Heavy chains are linked to bikunin via chondroitin 4-sulfate esterified to the alpha-carboxyl of the C-terminal aspartate after propeptide cleavage. As to expression, expressed in both liver and brain.

Its subcellular location is the secreted. In terms of biological role, may act as a carrier of hyaluronan in serum or as a binding protein between hyaluronan and other matrix protein, including those on cell surfaces in tissues to regulate the localization, synthesis and degradation of hyaluronan which are essential to cells undergoing biological processes. This Mus musculus (Mouse) protein is Inter-alpha-trypsin inhibitor heavy chain H3 (Itih3).